The chain runs to 889 residues: Alanine--tRNA ligase (889 aa).

Zn(2+)-binding residues include His564, His568, Cys671, and His675.

It belongs to the class-II aminoacyl-tRNA synthetase family. It depends on Zn(2+) as a cofactor.

The protein localises to the cytoplasm. It catalyses the reaction tRNA(Ala) + L-alanine + ATP = L-alanyl-tRNA(Ala) + AMP + diphosphate. Catalyzes the attachment of alanine to tRNA(Ala) in a two-step reaction: alanine is first activated by ATP to form Ala-AMP and then transferred to the acceptor end of tRNA(Ala). Also edits incorrectly charged Ser-tRNA(Ala) and Gly-tRNA(Ala) via its editing domain. The chain is Alanine--tRNA ligase from Pelagibacter ubique (strain HTCC1062).